A 198-amino-acid chain; its full sequence is Probable GTP-binding protein EngB (198 aa).

The region spanning 22-195 is the EngB-type G domain; the sequence is DLPEIALAGR…WKAIHKMTKT (174 aa). GTP is bound by residues 30–37, 57–61, 75–78, 142–145, and 174–176; these read GRSNVGKS, GKTQT, DVPG, TKAD, and FSS. Mg(2+) is bound by residues Ser37 and Thr59.

This sequence belongs to the TRAFAC class TrmE-Era-EngA-EngB-Septin-like GTPase superfamily. EngB GTPase family. Mg(2+) is required as a cofactor.

Its function is as follows. Necessary for normal cell division and for the maintenance of normal septation. This is Probable GTP-binding protein EngB from Bacillus mycoides (strain KBAB4) (Bacillus weihenstephanensis).